Here is a 483-residue protein sequence, read N- to C-terminus: Isocitrate dehydrogenase [NADP] (483 aa).

Thr74 serves as a coordination point for NADP(+). D-threo-isocitrate contacts are provided by Ser83, Asn85, Arg89, Arg99, and Arg121. Asp232 serves as a coordination point for Mg(2+). NADP(+) contacts are provided by residues 264-270 (HGSAPDI) and Asn277.

This sequence belongs to the isocitrate and isopropylmalate dehydrogenases family. In terms of assembly, homodimer. Requires Mg(2+) as cofactor. Mn(2+) is required as a cofactor.

It carries out the reaction D-threo-isocitrate + NADP(+) = 2-oxoglutarate + CO2 + NADPH. Catalyzes the oxidative decarboxylation of isocitrate to 2-oxoglutarate and carbon dioxide with the concomitant reduction of NADP(+). This chain is Isocitrate dehydrogenase [NADP] (icd), found in Rickettsia prowazekii (strain Madrid E).